The primary structure comprises 129 residues: UPF0102 protein CPS_4433 (129 aa).

Belongs to the UPF0102 family.

This is UPF0102 protein CPS_4433 from Colwellia psychrerythraea (strain 34H / ATCC BAA-681) (Vibrio psychroerythus).